The sequence spans 210 residues: Histidine biosynthesis bifunctional protein HisIE (210 aa).

The phosphoribosyl-AMP cyclohydrolase stretch occupies residues 1–106; it reads MTNYKIDFSK…SCFNTEVPFS (106 aa). The segment at 107 to 210 is phosphoribosyl-ATP pyrophosphohydrolase; that stretch reads VQTLAQTVQD…KGERQNIEQW (104 aa).

It in the N-terminal section; belongs to the PRA-CH family. The protein in the C-terminal section; belongs to the PRA-PH family.

It localises to the cytoplasm. It catalyses the reaction 1-(5-phospho-beta-D-ribosyl)-ATP + H2O = 1-(5-phospho-beta-D-ribosyl)-5'-AMP + diphosphate + H(+). The enzyme catalyses 1-(5-phospho-beta-D-ribosyl)-5'-AMP + H2O = 1-(5-phospho-beta-D-ribosyl)-5-[(5-phospho-beta-D-ribosylamino)methylideneamino]imidazole-4-carboxamide. It participates in amino-acid biosynthesis; L-histidine biosynthesis; L-histidine from 5-phospho-alpha-D-ribose 1-diphosphate: step 2/9. The protein operates within amino-acid biosynthesis; L-histidine biosynthesis; L-histidine from 5-phospho-alpha-D-ribose 1-diphosphate: step 3/9. The sequence is that of Histidine biosynthesis bifunctional protein HisIE (hisI) from Staphylococcus aureus (strain COL).